Consider the following 85-residue polypeptide: Neurtoxin 10 (85 aa).

Positions 1–23 are cleaved as a signal peptide; it reads MKFCVAVSLLIIASMAGVISVSG. Positions 24 to 85 constitute an LCN-type CS-alpha/beta domain; it reads YDVYPRDYAE…NFLSVIWKHC (62 aa). 3 disulfide bridges follow: C38–C60, C46–C65, and C50–C67.

It belongs to the long (3 C-C) scorpion toxin superfamily. As to expression, expressed by the venom gland.

The protein localises to the secreted. This chain is Neurtoxin 10, found in Lychas mucronatus (Chinese swimming scorpion).